Reading from the N-terminus, the 95-residue chain is MALERSDVEKIAHLARLGLDDAEIPRTTQTLNDILGLIDRMQAVDTHGIEPLAHPLEATQRLRPDEVTETDHRDAYQAIAPAVENGLYLVPKVIE.

Belongs to the GatC family. Heterotrimer of A, B and C subunits.

The enzyme catalyses L-glutamyl-tRNA(Gln) + L-glutamine + ATP + H2O = L-glutaminyl-tRNA(Gln) + L-glutamate + ADP + phosphate + H(+). It catalyses the reaction L-aspartyl-tRNA(Asn) + L-glutamine + ATP + H2O = L-asparaginyl-tRNA(Asn) + L-glutamate + ADP + phosphate + 2 H(+). Functionally, allows the formation of correctly charged Asn-tRNA(Asn) or Gln-tRNA(Gln) through the transamidation of misacylated Asp-tRNA(Asn) or Glu-tRNA(Gln) in organisms which lack either or both of asparaginyl-tRNA or glutaminyl-tRNA synthetases. The reaction takes place in the presence of glutamine and ATP through an activated phospho-Asp-tRNA(Asn) or phospho-Glu-tRNA(Gln). The polypeptide is Aspartyl/glutamyl-tRNA(Asn/Gln) amidotransferase subunit C (Azotobacter vinelandii (strain DJ / ATCC BAA-1303)).